A 226-amino-acid chain; its full sequence is Ras-related protein RABA4a (226 aa).

Position 2 is an N-acetylthreonine (threonine 2). 24–31 (GDSAVGKS) serves as a coordination point for GTP. The short motif at 46-54 (SKATIGVEF) is the Effector region element. GTP contacts are provided by residues 72-76 (DTAGQ), 130-133 (NKSD), and 160-161 (SA). Residues 189–226 (ASEDQENGNPGSLAGKKIDIVPGPGQVIPNKSNMCCNS) are disordered. Residues 217 to 226 (PNKSNMCCNS) show a composition bias toward polar residues. Residues cysteine 223 and cysteine 224 are each lipidated (S-geranylgeranyl cysteine).

The protein belongs to the small GTPase superfamily. Rab family. As to quaternary structure, interacts with TCTP1.

The protein resides in the cell membrane. Its function is as follows. Intracellular vesicle trafficking and protein transport. The protein is Ras-related protein RABA4a of Arabidopsis thaliana (Mouse-ear cress).